Reading from the N-terminus, the 541-residue chain is Chaperonin GroEL 5 (541 aa).

Residues 30–33 (TLGP), Gly-415, and Asp-496 contribute to the ATP site.

The protein belongs to the chaperonin (HSP60) family. Forms a cylinder of 14 subunits composed of two heptameric rings stacked back-to-back. Interacts with the co-chaperonin GroES.

It localises to the cytoplasm. The catalysed reaction is ATP + H2O + a folded polypeptide = ADP + phosphate + an unfolded polypeptide.. In terms of biological role, together with its co-chaperonin GroES, plays an essential role in assisting protein folding. The GroEL-GroES system forms a nano-cage that allows encapsulation of the non-native substrate proteins and provides a physical environment optimized to promote and accelerate protein folding. This Bradyrhizobium diazoefficiens (strain JCM 10833 / BCRC 13528 / IAM 13628 / NBRC 14792 / USDA 110) protein is Chaperonin GroEL 5.